A 117-amino-acid polypeptide reads, in one-letter code: Ig heavy chain V region UPC10 (117 aa).

In terms of domain architecture, Ig-like spans 1 to 116 (EVKLLESGGG…WGQVTTLTVS (116 aa)).

This is Ig heavy chain V region UPC10 from Mus musculus (Mouse).